We begin with the raw amino-acid sequence, 117 residues long: UPF0145 protein PH1682 (117 aa).

The protein belongs to the UPF0145 family.

This Pyrococcus horikoshii (strain ATCC 700860 / DSM 12428 / JCM 9974 / NBRC 100139 / OT-3) protein is UPF0145 protein PH1682.